We begin with the raw amino-acid sequence, 273 residues long: 2,3,4,5-tetrahydropyridine-2,6-dicarboxylate N-succinyltransferase (273 aa).

It belongs to the transferase hexapeptide repeat family.

The protein localises to the cytoplasm. The catalysed reaction is (S)-2,3,4,5-tetrahydrodipicolinate + succinyl-CoA + H2O = (S)-2-succinylamino-6-oxoheptanedioate + CoA. The protein operates within amino-acid biosynthesis; L-lysine biosynthesis via DAP pathway; LL-2,6-diaminopimelate from (S)-tetrahydrodipicolinate (succinylase route): step 1/3. This is 2,3,4,5-tetrahydropyridine-2,6-dicarboxylate N-succinyltransferase from Acinetobacter baumannii (strain AB307-0294).